Reading from the N-terminus, the 109-residue chain is Aquaporin-2 (109 aa).

Residues 1–6 (SIAFSR) are Cytoplasmic-facing. Residues 7-27 (AVLAEFLATLLFVFFGLGSAL) form a helical membrane-spanning segment. Over 28–35 (NWPQAMPS) the chain is Extracellular. Residues 36-54 (VLQIAMAFGLAIGTLVQAL) form a helical membrane-spanning segment. Residues 55–59 (GHVSG) lie on the Cytoplasmic side of the membrane. The discontinuously helical intramembrane region spans 60-69 (AHINPAVTVA). An NPA 1 motif is present at residues 63–65 (NPA). At 70 to 80 (CLVGCHVSFLR) the chain is on the cytoplasmic side. Residues 81–102 (AAFYVAAQLLGAVAGAALLHEI) form a helical membrane-spanning segment. Over 103-109 (TPPDIRR) the chain is Extracellular.

It belongs to the MIP/aquaporin (TC 1.A.8) family. As to quaternary structure, homotetramer. Serine phosphorylation is necessary and sufficient for expression at the apical membrane. Endocytosis is not phosphorylation-dependent. In terms of processing, N-glycosylated.

The protein localises to the apical cell membrane. Its subcellular location is the basolateral cell membrane. The protein resides in the cell membrane. It localises to the cytoplasmic vesicle membrane. It is found in the golgi apparatus. The protein localises to the trans-Golgi network membrane. The catalysed reaction is H2O(in) = H2O(out). It catalyses the reaction glycerol(in) = glycerol(out). Its function is as follows. Forms a water-specific channel that provides the plasma membranes of renal collecting duct with high permeability to water, thereby permitting water to move in the direction of an osmotic gradient. Plays an essential role in renal water homeostasis. Could also be permeable to glycerol. In Equus caballus (Horse), this protein is Aquaporin-2.